Here is a 59-residue protein sequence, read N- to C-terminus: Large ribosomal subunit protein bL32c (59 aa).

The disordered stretch occupies residues 36–59 (KSRSFSGVSEHPKPKGFSRQQTNK).

It belongs to the bacterial ribosomal protein bL32 family.

It localises to the plastid. The protein resides in the chloroplast. The polypeptide is Large ribosomal subunit protein bL32c (Oryza nivara (Indian wild rice)).